The sequence spans 239 residues: Fatty acid metabolism regulator protein (239 aa).

The HTH gntR-type domain occupies 6 to 74 (QSPAGFAEEY…HGKPTKINNF (69 aa)). Positions 34–53 (ERELSELIGVTRTTLREVLQ) form a DNA-binding region, H-T-H motif.

In terms of assembly, homodimer.

Its subcellular location is the cytoplasm. Its function is as follows. Multifunctional regulator of fatty acid metabolism. This is Fatty acid metabolism regulator protein from Pectobacterium carotovorum subsp. carotovorum (strain PC1).